Here is a 326-residue protein sequence, read N- to C-terminus: Nine-heme cytochrome c (326 aa).

Residues 1–30 (MRNGTSLLLLAAIALAGAACLTAMGGTAKA) form the signal peptide. Heme contacts are provided by histidine 67, histidine 70, cysteine 77, cysteine 80, histidine 81, histidine 82, cysteine 89, cysteine 92, histidine 93, histidine 111, cysteine 127, cysteine 130, histidine 131, cysteine 141, cysteine 144, histidine 145, cysteine 157, cysteine 160, histidine 161, histidine 227, histidine 230, histidine 248, cysteine 255, cysteine 258, histidine 259, histidine 260, cysteine 271, cysteine 274, histidine 275, histidine 294, cysteine 297, cysteine 300, histidine 301, cysteine 314, cysteine 317, and histidine 318.

In terms of assembly, monomer. In terms of processing, binds 9 heme groups per subunit.

It is found in the periplasm. May form part of a transmembrane redox complex through which electrons are transferred to the cytoplasm for reduction of sulfate. The polypeptide is Nine-heme cytochrome c (Desulfovibrio desulfuricans (strain ATCC 27774 / DSM 6949 / MB)).